The chain runs to 483 residues: UDP-N-acetylmuramate--L-alanine ligase (483 aa).

ATP is bound at residue 112–118; the sequence is GTHGKTT.

It belongs to the MurCDEF family.

The protein resides in the cytoplasm. The catalysed reaction is UDP-N-acetyl-alpha-D-muramate + L-alanine + ATP = UDP-N-acetyl-alpha-D-muramoyl-L-alanine + ADP + phosphate + H(+). It functions in the pathway cell wall biogenesis; peptidoglycan biosynthesis. Functionally, cell wall formation. In Ralstonia nicotianae (strain ATCC BAA-1114 / GMI1000) (Ralstonia solanacearum), this protein is UDP-N-acetylmuramate--L-alanine ligase.